A 182-amino-acid chain; its full sequence is CDP-diacylglycerol--glycerol-3-phosphate 3-phosphatidyltransferase (182 aa).

Over 1 to 12 the chain is Cytoplasmic; sequence MQLNIPTWLTLF. A helical transmembrane segment spans residues 13-37; that stretch reads RVVMIPFFVLAFYLPFKWAPLCCAL. Residues 38–60 are Periplasmic-facing; that stretch reads IFVLAAVTDWFDGFLARRWKQTT. A helical transmembrane segment spans residues 61–81; it reads RFGAFLDPVADKVMVAMALVL. Residues 82–86 lie on the Cytoplasmic side of the membrane; that stretch reads VAEHF. The helical transmembrane segment at 87 to 107 threads the bilayer; that stretch reads HSWWITLPAATMIAREIIISA. Residues 108-145 lie on the Periplasmic side of the membrane; it reads LREWMAEIGKRSSVAVSWIGKVKTTAQMLALVTLLWRP. A helical membrane pass occupies residues 146–168; it reads DDIVSGIGIAALYVAAVLTFWSM. Topologically, residues 169-181 are cytoplasmic; the sequence is FQYLYAARHDLFE.

The protein belongs to the CDP-alcohol phosphatidyltransferase class-I family.

It localises to the cell inner membrane. It carries out the reaction a CDP-1,2-diacyl-sn-glycerol + sn-glycerol 3-phosphate = a 1,2-diacyl-sn-glycero-3-phospho-(1'-sn-glycero-3'-phosphate) + CMP + H(+). It participates in phospholipid metabolism; phosphatidylglycerol biosynthesis; phosphatidylglycerol from CDP-diacylglycerol: step 1/2. Catalyzes the conversion of cytidine diphosphate diacylglycerol (CDP-DG) and glycerol 3-phosphate into phosphatidylglycerol. Essential for the synthesis of anionic phospholipids, thereby playing a role in balancing the ratio of zwitterionic and anionic phospholipids, which is thought to be important for normal membrane function. This Sodalis glossinidius (strain morsitans) protein is CDP-diacylglycerol--glycerol-3-phosphate 3-phosphatidyltransferase.